Consider the following 250-residue polypeptide: 26S proteasome non-ATPase regulatory subunit 8 (250 aa).

The region spanning 63–233 (HDFETFDDYI…QEKPVNLDTV (171 aa)) is the PCI domain.

The protein belongs to the proteasome subunit S14 family.

Functionally, acts as a regulatory subunit of the 26S proteasome which is involved in the ATP-dependent degradation of ubiquitinated proteins. The sequence is that of 26S proteasome non-ATPase regulatory subunit 8 from Caenorhabditis elegans.